Consider the following 199-residue polypeptide: Inner membrane protein E199L (199 aa).

An N-linked (GlcNAc...) asparagine; by host glycan is attached at N131. Residues I150–I170 traverse the membrane as a helical segment.

Belongs to the asfivirus E199L family. In terms of assembly, interacts with host PYCR2; this interaction results in autophagy activation.

The protein localises to the virion membrane. The protein resides in the host membrane. Functionally, essential for viral fusion with host endosomal membrane and core release. Not required for virus morphogenesis and egress. Induces complete autophagy through the interaction with and down-regulation of host PYCR2. The chain is Inner membrane protein E199L from African swine fever virus (isolate Pig/Kenya/KEN-50/1950) (ASFV).